We begin with the raw amino-acid sequence, 162 residues long: 3-isopropylmalate dehydratase small subunit (162 aa).

This sequence belongs to the LeuD family. LeuD type 2 subfamily. In terms of assembly, heterodimer of LeuC and LeuD.

The catalysed reaction is (2R,3S)-3-isopropylmalate = (2S)-2-isopropylmalate. It functions in the pathway amino-acid biosynthesis; L-leucine biosynthesis; L-leucine from 3-methyl-2-oxobutanoate: step 2/4. Catalyzes the isomerization between 2-isopropylmalate and 3-isopropylmalate, via the formation of 2-isopropylmaleate. This Pyrobaculum neutrophilum (strain DSM 2338 / JCM 9278 / NBRC 100436 / V24Sta) (Thermoproteus neutrophilus) protein is 3-isopropylmalate dehydratase small subunit.